The sequence spans 532 residues: Light-independent protochlorophyllide reductase subunit B (532 aa).

D36 is a binding site for [4Fe-4S] cluster. D292 functions as the Proton donor in the catalytic mechanism. Residue 428–429 participates in substrate binding; that stretch reads GL. The interval 445–486 is disordered; it reads EEEEPESISNGHAAAAGSEGGVPDSGEAGDAGDTDGMPWSPD.

This sequence belongs to the ChlB/BchB/BchZ family. In terms of assembly, protochlorophyllide reductase is composed of three subunits; BchL, BchN and BchB. Forms a heterotetramer of two BchB and two BchN subunits. The cofactor is [4Fe-4S] cluster.

The enzyme catalyses chlorophyllide a + oxidized 2[4Fe-4S]-[ferredoxin] + 2 ADP + 2 phosphate = protochlorophyllide a + reduced 2[4Fe-4S]-[ferredoxin] + 2 ATP + 2 H2O. It participates in porphyrin-containing compound metabolism; bacteriochlorophyll biosynthesis (light-independent). In terms of biological role, component of the dark-operative protochlorophyllide reductase (DPOR) that uses Mg-ATP and reduced ferredoxin to reduce ring D of protochlorophyllide (Pchlide) to form chlorophyllide a (Chlide). This reaction is light-independent. The NB-protein (BchN-BchB) is the catalytic component of the complex. In Chlorobium phaeobacteroides (strain BS1), this protein is Light-independent protochlorophyllide reductase subunit B.